A 299-amino-acid polypeptide reads, in one-letter code: 4-diphosphocytidyl-2-C-methyl-D-erythritol kinase (299 aa).

Lys-18 is a catalytic residue. 104–114 (PIASGIGGGSS) is a binding site for ATP. Asp-146 is an active-site residue.

This sequence belongs to the GHMP kinase family. IspE subfamily.

It catalyses the reaction 4-CDP-2-C-methyl-D-erythritol + ATP = 4-CDP-2-C-methyl-D-erythritol 2-phosphate + ADP + H(+). Its pathway is isoprenoid biosynthesis; isopentenyl diphosphate biosynthesis via DXP pathway; isopentenyl diphosphate from 1-deoxy-D-xylulose 5-phosphate: step 3/6. Catalyzes the phosphorylation of the position 2 hydroxy group of 4-diphosphocytidyl-2C-methyl-D-erythritol. The protein is 4-diphosphocytidyl-2-C-methyl-D-erythritol kinase of Brucella abortus biovar 1 (strain 9-941).